The following is an 83-amino-acid chain: Cytotoxin homolog 5 (83 aa).

A signal peptide spans M1–T21. 4 cysteine pairs are disulfide-bonded: C24-C43, C36-C61, C65-C76, and C77-C82.

This sequence belongs to the three-finger toxin family. Short-chain subfamily. Orphan group XV sub-subfamily. In terms of tissue distribution, expressed by the venom gland.

The protein resides in the secreted. The protein localises to the target cell membrane. Has low cytotoxic activity. This chain is Cytotoxin homolog 5, found in Naja atra (Chinese cobra).